Consider the following 577-residue polypeptide: Myb-like protein N (577 aa).

Disordered stretches follow at residues Met1 to Thr23, Thr206 to Asn225, and Ser240 to Ser264. The segment covering Pro213 to Asn225 has biased composition (low complexity). HTH myb-type domains are found at residues Lys403–Ile465 and Arg466–Val517. 2 DNA-binding regions (H-T-H motif) span residues Trp437–Leu461 and Trp489–Met513. Residues Pro518–Phe570 enclose the Myb-like domain.

It is found in the nucleus. This Dictyostelium discoideum (Social amoeba) protein is Myb-like protein N (mybN).